The following is a 266-amino-acid chain: 4-hydroxy-tetrahydrodipicolinate reductase (266 aa).

10–15 is an NAD(+) binding site; it reads GPRGRM. K38 lines the NADP(+) pocket. NAD(+) is bound by residues 99-101 and 125-128; these read GTT and APNF. H155 functions as the Proton donor/acceptor in the catalytic mechanism. H156 lines the (S)-2,3,4,5-tetrahydrodipicolinate pocket. Catalysis depends on K159, which acts as the Proton donor. 165–166 serves as a coordination point for (S)-2,3,4,5-tetrahydrodipicolinate; that stretch reads GT.

Belongs to the DapB family.

It localises to the cytoplasm. The enzyme catalyses (S)-2,3,4,5-tetrahydrodipicolinate + NAD(+) + H2O = (2S,4S)-4-hydroxy-2,3,4,5-tetrahydrodipicolinate + NADH + H(+). It carries out the reaction (S)-2,3,4,5-tetrahydrodipicolinate + NADP(+) + H2O = (2S,4S)-4-hydroxy-2,3,4,5-tetrahydrodipicolinate + NADPH + H(+). The protein operates within amino-acid biosynthesis; L-lysine biosynthesis via DAP pathway; (S)-tetrahydrodipicolinate from L-aspartate: step 4/4. Catalyzes the conversion of 4-hydroxy-tetrahydrodipicolinate (HTPA) to tetrahydrodipicolinate. The chain is 4-hydroxy-tetrahydrodipicolinate reductase from Bacillus cereus (strain ATCC 10987 / NRS 248).